Reading from the N-terminus, the 690-residue chain is ATP-dependent DNA helicase Hel308 (690 aa).

Residues Gln26 and Ile45–Thr52 contribute to the ATP site. Residues Ala32–Asp188 enclose the Helicase ATP-binding domain. The short motif at Asp133–His136 is the DEAH box element. A Helicase C-terminal domain is found at Glu208–Ile417.

This sequence belongs to the helicase family. Hel308 subfamily. Monomer. Binds replication protein A (RPA), in presence and absence of DNA.

It catalyses the reaction Couples ATP hydrolysis with the unwinding of duplex DNA by translocating in the 3'-5' direction.. The enzyme catalyses ATP + H2O = ADP + phosphate + H(+). Functionally, DNA-dependent ATPase and 3'-5' DNA helicase that may be involved in repair of stalled replication forks. Helicase with 3'-to 5'- polarity; able to unwind over 100 bp of DNA at 50 degrees Celsius. Unwinds forked DNA, preferentially on lagging strand forks; has weaker activity on Holliday junctions. Displaces the invading strand in DNA D-loops. Unwinds short oligonucleotides from dsDNA with 3'- but not blunt ends or 5'-ssDNA tails in an ATP-dependent manner. ATPase activity is stimulated by ssDNA but not dsDNA, protein binds ssDNA, dsDNA with 5'- or 3'-overhangs but not blunt ended dsDNA and replication forks. Replication forks bind both this protein and RPA. RPA does not stimulate the helicase activity of this protein. This chain is ATP-dependent DNA helicase Hel308, found in Methanothermobacter thermautotrophicus (strain ATCC 29096 / DSM 1053 / JCM 10044 / NBRC 100330 / Delta H) (Methanobacterium thermoautotrophicum).